A 405-amino-acid polypeptide reads, in one-letter code: Terpene cyclase pbrA (405 aa).

6 residues coordinate Mg(2+): D103, E168, N229, S233, E237, and D241. A D(D/E)XX(D/E) motif motif is present at residues 103-108 (DDEISS). Positions 227-237 (LVNDLFSFYKE) match the NSE motif motif. The short motif at 316–323 (EDLGGSSA) is the WxxxxxRY motif element.

The protein belongs to the trichodiene synthase family. Mg(2+) serves as cofactor.

It functions in the pathway secondary metabolite biosynthesis; terpenoid biosynthesis. In terms of biological role, terpene cyclase; part of the gene cluster that mediates the biosynthesis of the sesquiterpenoid aspterric acid (AA), an inhibitor of dihydroxy-acid dehydratase (DHAD) effective as an herbicide. PbrA cyclizes farnesyl diphosphate (FPP) to produce (-)-daucane. The cytochrome P450 monooxygenase pbrBB then converts (-)-daucane into the alpha-epoxy carboxylate intermediate which is further converted into the tricyclic aspterric acid by the cytochrome P450 monooxygenase pbrC. The protein is Terpene cyclase pbrA of Penicillium brasilianum.